Consider the following 424-residue polypeptide: Glutamyl-tRNA(Gln) amidotransferase subunit D (424 aa).

The tract at residues 58–79 (NTNGGLNGGKEHKTAGEEVQKS) is disordered. The span at 66–78 (GKEHKTAGEEVQK) shows a compositional bias: basic and acidic residues. In terms of domain architecture, Asparaginase/glutaminase spans 84 to 406 (PKVAILSTGG…LGQTDEFNEA (323 aa)). Residues threonine 94, threonine 170, aspartate 171, and lysine 247 contribute to the active site.

This sequence belongs to the asparaginase 1 family. GatD subfamily. In terms of assembly, heterodimer of GatD and GatE.

The enzyme catalyses L-glutamyl-tRNA(Gln) + L-glutamine + ATP + H2O = L-glutaminyl-tRNA(Gln) + L-glutamate + ADP + phosphate + H(+). Its function is as follows. Allows the formation of correctly charged Gln-tRNA(Gln) through the transamidation of misacylated Glu-tRNA(Gln) in organisms which lack glutaminyl-tRNA synthetase. The reaction takes place in the presence of glutamine and ATP through an activated gamma-phospho-Glu-tRNA(Gln). The GatDE system is specific for glutamate and does not act on aspartate. The polypeptide is Glutamyl-tRNA(Gln) amidotransferase subunit D (Methanosarcina barkeri (strain Fusaro / DSM 804)).